We begin with the raw amino-acid sequence, 345 residues long: Matrix protein (345 aa).

Residues 148-185 form a disordered region; the sequence is KKKSKAKSAEGPSASTEDIKDSDTKGNQDIGDNGDLNS. Residues 164-173 are compositionally biased toward basic and acidic residues; the sequence is EDIKDSDTKG.

The protein localises to the virion. In Aphis (Hairy beggarticks), this protein is Matrix protein (M2).